The following is a 505-amino-acid chain: Protein nucleotidyltransferase YdiU (505 aa).

Gly102, Gly104, Arg105, Lys125, Asp137, Gly138, Arg188, and Arg195 together coordinate ATP. The active-site Proton acceptor is the Asp264. Mg(2+) is bound by residues Asn265 and Asp274. Asp274 is an ATP binding site.

It belongs to the SELO family. Mg(2+) serves as cofactor. Mn(2+) is required as a cofactor.

It catalyses the reaction L-seryl-[protein] + ATP = 3-O-(5'-adenylyl)-L-seryl-[protein] + diphosphate. The enzyme catalyses L-threonyl-[protein] + ATP = 3-O-(5'-adenylyl)-L-threonyl-[protein] + diphosphate. The catalysed reaction is L-tyrosyl-[protein] + ATP = O-(5'-adenylyl)-L-tyrosyl-[protein] + diphosphate. It carries out the reaction L-histidyl-[protein] + UTP = N(tele)-(5'-uridylyl)-L-histidyl-[protein] + diphosphate. It catalyses the reaction L-seryl-[protein] + UTP = O-(5'-uridylyl)-L-seryl-[protein] + diphosphate. The enzyme catalyses L-tyrosyl-[protein] + UTP = O-(5'-uridylyl)-L-tyrosyl-[protein] + diphosphate. Its function is as follows. Nucleotidyltransferase involved in the post-translational modification of proteins. It can catalyze the addition of adenosine monophosphate (AMP) or uridine monophosphate (UMP) to a protein, resulting in modifications known as AMPylation and UMPylation. This is Protein nucleotidyltransferase YdiU from Nitrobacter winogradskyi (strain ATCC 25391 / DSM 10237 / CIP 104748 / NCIMB 11846 / Nb-255).